The chain runs to 674 residues: Methionine--tRNA ligase (674 aa).

The short motif at 11-21 is the 'HIGH' region element; sequence PYANGDLHLGH. C142, C145, C155, and C158 together coordinate Zn(2+). The 'KMSKS' region signature appears at 330-334; the sequence is KMSKS. K333 serves as a coordination point for ATP. Residues 574–674 form the tRNA-binding domain; the sequence is DFMKVDLRIA…EGAQPGMRVK (101 aa).

This sequence belongs to the class-I aminoacyl-tRNA synthetase family. MetG type 1 subfamily. In terms of assembly, homodimer. Zn(2+) serves as cofactor.

The protein localises to the cytoplasm. It catalyses the reaction tRNA(Met) + L-methionine + ATP = L-methionyl-tRNA(Met) + AMP + diphosphate. In terms of biological role, is required not only for elongation of protein synthesis but also for the initiation of all mRNA translation through initiator tRNA(fMet) aminoacylation. The protein is Methionine--tRNA ligase of Francisella tularensis subsp. holarctica (strain FTNF002-00 / FTA).